The primary structure comprises 536 residues: Signal peptide peptidase-like 5 (536 aa).

A signal peptide spans 1–29 (MSLPPFTCRLLAAAAALYLIGLLCVGADT). Residues 30 to 186 (KDVTAPKIPG…VELLLYAPKS (157 aa)) lie on the Lumenal side of the membrane. The 77-residue stretch at 94-170 (SNLTSKLSWS…TSSGDALKKS (77 aa)) folds into the PA domain. N-linked (GlcNAc...) asparagine glycans are attached at residues Asn95 and Asn151. A helical membrane pass occupies residues 187-207 (PIVDYAVVFLWLMSVGTVFVA). Residues 208 to 243 (SVWSHVTSPKKNDEQYDELSPKKSSNVDATKGGAEE) are Cytoplasmic-facing. The disordered stretch occupies residues 218–238 (KNDEQYDELSPKKSSNVDATK). The helical transmembrane segment at 244-264 (ETLDISAMGAVIFVISASTFL) threads the bilayer. Topologically, residues 265-273 (VLLFFFMSS) are lumenal. The helical transmembrane segment at 274–296 (WFILILTIFFVIGGMQGMHNINV) threads the bilayer. Residues 297-318 (TLITRRCSKCGQKNLKLPLLGN) are Cytoplasmic-facing. A helical transmembrane segment spans residues 319-339 (TSILSLVVLLFCFVVAILWFM). Residues 340–344 (NRKTS) lie on the Lumenal side of the membrane. Residues 345–365 (HAWAGQDIFGICMMINVLQVA) form a helical membrane-spanning segment. The Cytoplasmic segment spans residues 366–374 (RLPNIRVAT). A helical membrane pass occupies residues 375 to 395 (ILLCCAFFYDIFWVFISPLIF). Residue Asp384 is part of the active site. At 396–428 (KQSVMIAVARGSKDTGESIPMLLRIPRLSDPWG) the chain is on the lumenal side. Residues 429-449 (GYNMIGFGDILFPGLLICFIF) traverse the membrane as a helical segment. Asp437 is a catalytic residue. The Cytoplasmic portion of the chain corresponds to 450 to 463 (RFDKENNKGVSNGY). Residues 464–484 (FPWLMFGYGLGLFLTYLGLYV) form a helical membrane-spanning segment. Residues 485–489 (MNGHG) are Lumenal-facing. The helical transmembrane segment at 490–510 (QPALLYLVPCTLGITVILGLV) threads the bilayer. Positions 491–493 (PAL) match the PAL motif. At 511 to 536 (RKELRDLWNYGTQQPSAADVNPSPEA) the chain is on the cytoplasmic side.

Belongs to the peptidase A22B family. In terms of processing, glycosylated.

The protein localises to the endosome membrane. Its function is as follows. Intramembrane-cleaving aspartic protease (I-CLiP) that cleaves type II membrane signal peptides in the hydrophobic plane of the membrane. The sequence is that of Signal peptide peptidase-like 5 (SPPL5) from Arabidopsis thaliana (Mouse-ear cress).